Here is a 184-residue protein sequence, read N- to C-terminus: Rhox homeobox family member 1 (184 aa).

The interval 26-104 (QLGAASSAEG…GPQPENMQPR (79 aa)) is disordered. Residues 88–99 (PAQAAMEGPQPE) show a composition bias toward low complexity. Residues 103-162 (PRTRRTKFTLLQVEELESVFRHTQYPDVPTRRELAENLGVTEDKVRVWFKNKRARCRRHQ) constitute a DNA-binding region (homeobox). A Nuclear localization signal motif is present at residues 155-164 (RARCRRHQRE).

It belongs to the paired-like homeobox family. PEPP subfamily. In terms of assembly, does not interact with itself. As to expression, ovary, testis and epididymis. Also detected in the prostate and the mammary gland. Expressed in many tumor cell lines derived from acute lymphocytic leukemia, prostate, endometrial adenocarcinoma, melanoma, bladder carcinoma, colon carcinoma, erythroleukemia and breast carcinoma. Not expressed in placenta. In testis, mainly expressed in germ cells, but also detected in somatic cells such as Sertoli cells, Leydig cells and peritubular cells.

The protein localises to the nucleus. Its function is as follows. Transcription factor maybe involved in reproductive processes. Modulates expression of target genes encoding proteins involved in processes relevant to spermatogenesis. This chain is Rhox homeobox family member 1, found in Homo sapiens (Human).